The sequence spans 207 residues: Killer cell lectin-like receptor subfamily F member 2 (207 aa).

The Cytoplasmic segment spans residues 1 to 30 (MENEDGYMTLSFKNRCKSKQKSKDFSLYPQ). Tyr-7 is subject to Phosphotyrosine. Residues 31 to 51 (YYCLLLIFGCIVILIFIMTGI) traverse the membrane as a helical; Signal-anchor for type II membrane protein segment. Over 52 to 207 (DLKFWHKKMD…ILTHNGTSGV (156 aa)) the chain is Extracellular. Asn-67 carries N-linked (GlcNAc...) asparagine glycosylation. Intrachain disulfides connect Cys-78–Cys-89, Cys-106–Cys-193, and Cys-172–Cys-185. Residues 85 to 194 (NEGKCYWFST…CSSTFKGICQ (110 aa)) enclose the C-type lectin domain. A glycan (N-linked (GlcNAc...) asparagine) is linked at Asn-202.

In terms of assembly, homodimer; non-disulfide-linked. Interacts with CLEC2A. N-glycosylated.

The protein localises to the cell membrane. C-type lectin-like receptor involved in natural killer cell mediated cytotoxicity and cytokine secretion in keratinocytes via its interaction with CLEC2A. Triggers degranulation in a SYK-dependent manner and stimulates SYK phosphotyrosinylation without recruiting SYK directly. The protein is Killer cell lectin-like receptor subfamily F member 2 (KLRF2) of Homo sapiens (Human).